The chain runs to 365 residues: Histidinol-phosphate aminotransferase (365 aa).

Lys222 bears the N6-(pyridoxal phosphate)lysine mark.

This sequence belongs to the class-II pyridoxal-phosphate-dependent aminotransferase family. Histidinol-phosphate aminotransferase subfamily. Homodimer. Pyridoxal 5'-phosphate is required as a cofactor.

It carries out the reaction L-histidinol phosphate + 2-oxoglutarate = 3-(imidazol-4-yl)-2-oxopropyl phosphate + L-glutamate. It functions in the pathway amino-acid biosynthesis; L-histidine biosynthesis; L-histidine from 5-phospho-alpha-D-ribose 1-diphosphate: step 7/9. The protein is Histidinol-phosphate aminotransferase of Geobacillus thermodenitrificans (strain NG80-2).